Here is a 225-residue protein sequence, read N- to C-terminus: N-(5'-phosphoribosyl)anthranilate isomerase (225 aa).

Belongs to the TrpF family.

The catalysed reaction is N-(5-phospho-beta-D-ribosyl)anthranilate = 1-(2-carboxyphenylamino)-1-deoxy-D-ribulose 5-phosphate. The protein operates within amino-acid biosynthesis; L-tryptophan biosynthesis; L-tryptophan from chorismate: step 3/5. This chain is N-(5'-phosphoribosyl)anthranilate isomerase, found in Nitrobacter winogradskyi (strain ATCC 25391 / DSM 10237 / CIP 104748 / NCIMB 11846 / Nb-255).